The chain runs to 450 residues: Phosphoglucosamine mutase (450 aa).

Catalysis depends on Ser102, which acts as the Phosphoserine intermediate. Residues Ser102, Asp243, Asp245, and Asp247 each contribute to the Mg(2+) site. Phosphoserine is present on Ser102.

The protein belongs to the phosphohexose mutase family. It depends on Mg(2+) as a cofactor. Post-translationally, activated by phosphorylation.

It catalyses the reaction alpha-D-glucosamine 1-phosphate = D-glucosamine 6-phosphate. Its function is as follows. Catalyzes the conversion of glucosamine-6-phosphate to glucosamine-1-phosphate. The protein is Phosphoglucosamine mutase of Rhizobium rhizogenes (strain K84 / ATCC BAA-868) (Agrobacterium radiobacter).